The sequence spans 188 residues: Ribonuclease HII (188 aa).

The 183-residue stretch at 6-188 (KPLCGIDEAG…VKGLDEPTLF (183 aa)) folds into the RNase H type-2 domain. 3 residues coordinate a divalent metal cation: D12, E13, and D99.

The protein belongs to the RNase HII family. Requires Mn(2+) as cofactor. Mg(2+) is required as a cofactor.

The protein resides in the cytoplasm. The catalysed reaction is Endonucleolytic cleavage to 5'-phosphomonoester.. In terms of biological role, endonuclease that specifically degrades the RNA of RNA-DNA hybrids. The sequence is that of Ribonuclease HII from Sulfurovum sp. (strain NBC37-1).